The sequence spans 424 residues: MATRVVVGTQWGDEGKGKYIDMLAKDSDMVVRFSGGNNAGHTIVANGVKYALHLIPSGILNEGKTCIIGNGVVVDPAVLLKEIKELNEKGISTDRLLISDRAHVIMPYHKLLDELQEKFRGENSIGTTKRGIGPCYSDKTERSGIRMCDLVDEDEFVRKVRENLKVKNLIIEKVYGGQKLDEEQVISEYLEYGRKLKEYVADVNSIIFEAIEQGKNILFEGAQATFLDLDFGTYPYVTSSNPVAGGVCTGAGVGPVFINEVYGVLKAYTSRVGAGPFPTEQNNEIGDRIRELGWEYGTTTGRPRRCGWLDLVMIKYAARVNGLTALAINHVDTIGKLPKIKLCVAYKKNGQETRNFPCSLKELAQCEPVYEEFDGWDEDISNVKSFDDLPDNAKKYLSRIEEIVGVKIKLIGVGKEREQTIVVN.

Residues 12 to 18 (GDEGKGK) and 40 to 42 (GHT) each bind GTP. The Proton acceptor role is filled by Asp13. Residues Asp13 and Gly40 each contribute to the Mg(2+) site. IMP-binding positions include 13–16 (DEGK), 38–41 (NAGH), Thr128, Arg142, Gln223, Thr238, and Arg302. His41 functions as the Proton donor in the catalytic mechanism. 298–304 (TTTGRPR) contacts substrate. GTP contacts are provided by residues Arg304, 330–332 (HVD), and 412–414 (GVG).

Belongs to the adenylosuccinate synthetase family. Homodimer. It depends on Mg(2+) as a cofactor.

The protein localises to the cytoplasm. The catalysed reaction is IMP + L-aspartate + GTP = N(6)-(1,2-dicarboxyethyl)-AMP + GDP + phosphate + 2 H(+). The protein operates within purine metabolism; AMP biosynthesis via de novo pathway; AMP from IMP: step 1/2. Its function is as follows. Plays an important role in the de novo pathway of purine nucleotide biosynthesis. Catalyzes the first committed step in the biosynthesis of AMP from IMP. In Acetivibrio thermocellus (strain ATCC 27405 / DSM 1237 / JCM 9322 / NBRC 103400 / NCIMB 10682 / NRRL B-4536 / VPI 7372) (Clostridium thermocellum), this protein is Adenylosuccinate synthetase.